A 167-amino-acid chain; its full sequence is Cytochrome c-type biogenesis protein CcmE (167 aa).

The Cytoplasmic segment spans residues 1–7 (MTRKTRR). The chain crosses the membrane as a helical; Signal-anchor for type II membrane protein span at residues 8–28 (LWIVIACLACVGSAAALTLRA). The Periplasmic segment spans residues 29-167 (FSSNIVFFMA…DTMTAKKAGG (139 aa)). Residues His125 and Tyr129 each contribute to the heme site. Positions 141 to 150 (TGKWDPRFGK) are enriched in basic and acidic residues. Residues 141-167 (TGKWDPRFGKAPDASSWDTMTAKKAGG) are disordered.

Belongs to the CcmE/CycJ family.

The protein resides in the cell inner membrane. In terms of biological role, heme chaperone required for the biogenesis of c-type cytochromes. Transiently binds heme delivered by CcmC and transfers the heme to apo-cytochromes in a process facilitated by CcmF and CcmH. This chain is Cytochrome c-type biogenesis protein CcmE, found in Gluconobacter oxydans (strain 621H) (Gluconobacter suboxydans).